The chain runs to 496 residues: Aspartyl/glutamyl-tRNA(Asn/Gln) amidotransferase subunit B (496 aa).

This sequence belongs to the GatB/GatE family. GatB subfamily. As to quaternary structure, heterotrimer of A, B and C subunits.

The catalysed reaction is L-glutamyl-tRNA(Gln) + L-glutamine + ATP + H2O = L-glutaminyl-tRNA(Gln) + L-glutamate + ADP + phosphate + H(+). It carries out the reaction L-aspartyl-tRNA(Asn) + L-glutamine + ATP + H2O = L-asparaginyl-tRNA(Asn) + L-glutamate + ADP + phosphate + 2 H(+). Allows the formation of correctly charged Asn-tRNA(Asn) or Gln-tRNA(Gln) through the transamidation of misacylated Asp-tRNA(Asn) or Glu-tRNA(Gln) in organisms which lack either or both of asparaginyl-tRNA or glutaminyl-tRNA synthetases. The reaction takes place in the presence of glutamine and ATP through an activated phospho-Asp-tRNA(Asn) or phospho-Glu-tRNA(Gln). This Natronomonas pharaonis (strain ATCC 35678 / DSM 2160 / CIP 103997 / JCM 8858 / NBRC 14720 / NCIMB 2260 / Gabara) (Halobacterium pharaonis) protein is Aspartyl/glutamyl-tRNA(Asn/Gln) amidotransferase subunit B.